The primary structure comprises 964 residues: Protein HIRA (964 aa).

WD repeat units follow at residues 10–50 (RHEG…KDNT), 64–103 (DHFG…GTSE), 123–162 (GHTA…CTAV), 165–204 (GHTS…LAHK), 259–331 (GHNA…PLFV), and 335–376 (FFSQ…HRLS). The tract at residues 453–490 (SHEDSKKTAGPTADDVKKGNQLSSPVKQREYRRPDGRK) is disordered. Basic and acidic residues predominate over residues 479–490 (KQREYRRPDGRK). Residues 644–685 (LWSDRISGKVTVLAGNANFWAVGCEDGFLQVYTRCGVRAMPA) form a WD 7 repeat. A coiled-coil region spans residues 920 to 940 (ASNRKVQRLLNEFMDLLLEYE).

This sequence belongs to the WD repeat HIR1 family. As to quaternary structure, interacts with RS2. In terms of tissue distribution, more abundant in apices and young leaf primordia than in fully expanded leaf tissues.

It localises to the nucleus. Functionally, histone chaperone involved in maintining knox genes silencing throughout leaf development. This Zea mays (Maize) protein is Protein HIRA.